The following is a 480-amino-acid chain: Cysteine--tRNA ligase (480 aa).

Cys-27 lines the Zn(2+) pocket. Residues 29-39 (PTVYNYAHIGN) carry the 'HIGH' region motif. Cys-221, His-246, and Glu-250 together coordinate Zn(2+). The 'KMSKS' region motif lies at 278 to 282 (KMSKS). Residue Lys-281 coordinates ATP.

Belongs to the class-I aminoacyl-tRNA synthetase family. As to quaternary structure, monomer. Zn(2+) serves as cofactor.

Its subcellular location is the cytoplasm. The catalysed reaction is tRNA(Cys) + L-cysteine + ATP = L-cysteinyl-tRNA(Cys) + AMP + diphosphate. The chain is Cysteine--tRNA ligase from Borreliella afzelii (strain PKo) (Borrelia afzelii).